We begin with the raw amino-acid sequence, 529 residues long: GMP synthase [glutamine-hydrolyzing] (529 aa).

The Glutamine amidotransferase type-1 domain maps to 17–206 (TILVLDFGSQ…AIDICQASNN (190 aa)). The active-site Nucleophile is the cysteine 93. Active-site residues include histidine 180 and glutamate 182. The 198-residue stretch at 207–404 (WTMENFIDTE…MGVPHDLVWR (198 aa)) folds into the GMPS ATP-PPase domain. Residue 235-241 (SGGVDST) coordinates ATP. Positions 308, 466, 521, and 527 each coordinate XMP.

Homodimer. The cofactor is Mg(2+).

Its subcellular location is the cytoplasm. It localises to the cytosol. The catalysed reaction is XMP + L-glutamine + ATP + H2O = GMP + L-glutamate + AMP + diphosphate + 2 H(+). Its pathway is purine metabolism; GMP biosynthesis; GMP from XMP (L-Gln route): step 1/1. Functionally, catalyzes the conversion of xanthine monophosphate (XMP) to GMP in the presence of glutamine and ATP through an adenyl-XMP intermediate. The protein is GMP synthase [glutamine-hydrolyzing] (GUA1) of Debaryomyces hansenii (strain ATCC 36239 / CBS 767 / BCRC 21394 / JCM 1990 / NBRC 0083 / IGC 2968) (Yeast).